Here is a 997-residue protein sequence, read N- to C-terminus: Glutamate [NMDA] receptor subunit 1 (997 aa).

The N-terminal stretch at 1 to 26 (MAVAGFVFCWPLLGLTIVLLVAPIDA) is a signal peptide. At 27–573 (AQRHTASDNP…TLVSFLQPFS (547 aa)) the chain is on the extracellular side. N-linked (GlcNAc...) asparagine glycans are attached at residues Asn-258, Asn-314, Asn-345, Asn-397, Asn-454, Asn-481, and Asn-501. Residues 530 to 532 (PLT) and Arg-537 each bind glycine. The helical transmembrane segment at 574-594 (NTLWILVMVSVHVVALVLYLL) threads the bilayer. Topologically, residues 595 to 651 (DRFSPFGRFKLSHSDSNEEKALNLSSAVWFAWGVLLNSGIGEGTPRSFSARVLGMVW) are cytoplasmic. The chain crosses the membrane as a helical span at residues 652–672 (AGFAMIIVASYTANLAAFLVL). The Extracellular segment spans residues 673 to 831 (ERPKTKLSGI…KTPNTLGLKN (159 aa)). An N-linked (GlcNAc...) asparagine glycan is attached at Asn-693. Glycine contacts are provided by Ser-703 and Asp-747. A helical membrane pass occupies residues 832-852 (MAGVFILVGVGIAGGVGLIII). The Cytoplasmic segment spans residues 853–997 (EVIYKKHQVK…YTSDVSHLVV (145 aa)). The tract at residues 970 to 997 (LGKTRPQQSVLPPRYSPGYTSDVSHLVV) is disordered. The span at 987-997 (GYTSDVSHLVV) shows a compositional bias: polar residues.

Belongs to the glutamate-gated ion channel (TC 1.A.10.1) family. Forms a heteromeric NMDA channel with Nmdar2.

The protein localises to the cell membrane. The protein resides in the postsynaptic cell membrane. It is found in the postsynaptic density. NMDA receptor subtype of glutamate-gated ion channels with high calcium permeability and voltage-dependent sensitivity to magnesium. Mediated by glycine. This protein plays a key role in synaptic plasticity, synaptogenesis, excitotoxicity, memory acquisition and learning. It mediates neuronal functions in glutamate neurotransmission. Is involved in the cell surface targeting of NMDA receptors. Plays a role in associative learning and in long-term memory consolidation. This chain is Glutamate [NMDA] receptor subunit 1, found in Drosophila yakuba (Fruit fly).